Consider the following 269-residue polypeptide: Formamidopyrimidine-DNA glycosylase (269 aa).

P2 serves as the catalytic Schiff-base intermediate with DNA. Catalysis depends on E3, which acts as the Proton donor. K57 serves as the catalytic Proton donor; for beta-elimination activity. Residues H90, R109, and K150 each contribute to the DNA site. The segment at 235-269 adopts an FPG-type zinc-finger fold; it reads QVYGKGGLPCPKCGTELAEVKIGQRATVYCSQCQQ. Residue R259 is the Proton donor; for delta-elimination activity of the active site.

It belongs to the FPG family. Monomer. Requires Zn(2+) as cofactor.

It carries out the reaction Hydrolysis of DNA containing ring-opened 7-methylguanine residues, releasing 2,6-diamino-4-hydroxy-5-(N-methyl)formamidopyrimidine.. The catalysed reaction is 2'-deoxyribonucleotide-(2'-deoxyribose 5'-phosphate)-2'-deoxyribonucleotide-DNA = a 3'-end 2'-deoxyribonucleotide-(2,3-dehydro-2,3-deoxyribose 5'-phosphate)-DNA + a 5'-end 5'-phospho-2'-deoxyribonucleoside-DNA + H(+). Its function is as follows. Involved in base excision repair of DNA damaged by oxidation or by mutagenic agents. Acts as a DNA glycosylase that recognizes and removes damaged bases. Has a preference for oxidized purines, such as 7,8-dihydro-8-oxoguanine (8-oxoG). Has AP (apurinic/apyrimidinic) lyase activity and introduces nicks in the DNA strand. Cleaves the DNA backbone by beta-delta elimination to generate a single-strand break at the site of the removed base with both 3'- and 5'-phosphates. This chain is Formamidopyrimidine-DNA glycosylase, found in Photobacterium damsela subsp. piscicida (Pasteurella piscicida).